The chain runs to 128 residues: Con-Ins F2c (128 aa).

The signal sequence occupies residues 1 to 24; that stretch reads MTTSSYFLLVALGLLLYVCRSSFG. 4 cysteine pairs are disulfide-bonded: cysteine 29–cysteine 104, cysteine 41–cysteine 107, cysteine 53–cysteine 120, and cysteine 106–cysteine 111. A propeptide spans 59–89 (c peptide); that stretch reads LQGGTGKKRGRASLLRKRRAFLSMLKARAKR. Glutamate 115 carries the post-translational modification 4-carboxyglutamate; partial. At serine 127 the chain carries Serine amide.

Belongs to the insulin family. In terms of assembly, heterodimer of A and B chains; disulfide-linked. As to expression, expressed by the venom gland.

It is found in the secreted. Functionally, this venom insulin facilitates prey capture by rapidly inducing hypoglycemic shock. Intraperitoneal injection of this peptide into zebrafish lowers blood glucose with the same potency than human insulin. In vivo, when applied to water, this peptide reduces overall locomotor activity of zebrafish larvae, observed as a significant decrease in the percentage of time spent swimming and movement frequency. The chain is Con-Ins F2c from Conus floridulus (Cone snail).